The chain runs to 149 residues: Large ribosomal subunit protein bL9 (149 aa).

The protein belongs to the bacterial ribosomal protein bL9 family.

Binds to the 23S rRNA. In Helicobacter pylori (strain J99 / ATCC 700824) (Campylobacter pylori J99), this protein is Large ribosomal subunit protein bL9.